The sequence spans 198 residues: DnaJ homolog subfamily C member 5 (198 aa).

Ser-8, Ser-10, Ser-12, and Ser-15 each carry phosphoserine. The region spanning 13–82 is the J domain; sequence GESLYHVLGL…RNIYDKYGSL (70 aa). Position 17 is a phosphotyrosine (Tyr-17). Residue Lys-56 is modified to N6-acetyllysine. The residue at position 151 (Ser-151) is a Phosphoserine.

As to quaternary structure, oligomers. Homodimer. Interacts with the chaperone complex consisting of HSC70 and SGTA. Interacts with ZDHHC13 (via ANK repeats). Interacts with ZDHHC17 (via ANK repeats). Interacts with SYT1, SYT5 and SYT7, and with SYT9, forming a complex with SNAP25. Post-translationally, ser-10 phosphorylation induces an order-to-disorder transition triggering the interaction with Lys-58. This conformational switch modulates DNAJC5's cellular functions by reducing binding to syntaxin and synaptogamin without altering HSC70 interactions. Palmitoylated. Could be palmitoylated by DHHC3, DHHC7, DHHC15 and DHHC17. Palmitoylation occurs probably in the cysteine-rich domain and regulates DNAJC5 membrane attachment. In terms of tissue distribution, expressed in pancreas, kidney, skeletal muscle, liver, lung, placenta, brain and heart.

Its subcellular location is the cytoplasm. It is found in the cytosol. It localises to the membrane. The protein localises to the cytoplasmic vesicle. The protein resides in the secretory vesicle. Its subcellular location is the chromaffin granule membrane. It is found in the melanosome. It localises to the cell membrane. Its function is as follows. Acts as a general chaperone in regulated exocytosis. Acts as a co-chaperone for the SNARE protein SNAP-25. Involved in the calcium-mediated control of a late stage of exocytosis. May have an important role in presynaptic function. May be involved in calcium-dependent neurotransmitter release at nerve endings. The chain is DnaJ homolog subfamily C member 5 from Homo sapiens (Human).